Reading from the N-terminus, the 353-residue chain is COMPASS component SPP1 (353 aa).

A PHD-type zinc finger spans residues 22 to 72 (DVYCICKRPDYGELMVGCDGCDDWFHFTCLHIPEQFKDLVFSFYCPYCQAG). Cys-25, Cys-27, Cys-39, Cys-42, His-47, Cys-50, Cys-66, and Cys-69 together coordinate Zn(2+). Positions 83 to 124 (NGEGSLPKTLWKRKCRISDCYKPCLQDSKYCSEEHGREFVND) are non coventional C3H-type zinc finger. Ser-87 carries the phosphoserine modification. Zn(2+) contacts are provided by Cys-97, Cys-102, Cys-113, and His-117. The segment covering 235-244 (VECGKEDSKG) has biased composition (basic and acidic residues). Residues 235 to 255 (VECGKEDSKGTKRKKKKNSSR) form a disordered region. Residues 245-255 (TKRKKKKNSSR) are compositionally biased toward basic residues.

As to quaternary structure, component of the Set1C/COMPASS complex which consists of SET1(2), BRE2(2), SPP1(2), SDC1(1), SHG1(1), SWD1(1), SWD2(1), and SWD3(1).

It localises to the nucleus. Functionally, component of the Set1C/COMPASS complex that specifically mono-, di- and trimethylates histone H3 to form H3K4me1/2/3, which subsequently plays a role in telomere length maintenance and transcription elongation regulation. COMPASS recognizes ubiquitinated H2B on one face of the nucleosome which stimulates the methylation of H3 on the opposing face. SPP1/CPS40 can recognize methylated histone lysine residue H3K4me3 or unmethylated H3K4. Stimulates the RNA binding activity of SET1. The protein is COMPASS component SPP1 of Saccharomyces cerevisiae (strain ATCC 204508 / S288c) (Baker's yeast).